The following is a 54-amino-acid chain: Large ribosomal subunit protein bL33A (54 aa).

It belongs to the bacterial ribosomal protein bL33 family.

The sequence is that of Large ribosomal subunit protein bL33A from Saccharopolyspora erythraea (strain ATCC 11635 / DSM 40517 / JCM 4748 / NBRC 13426 / NCIMB 8594 / NRRL 2338).